A 160-amino-acid polypeptide reads, in one-letter code: Cytochrome b6-f complex subunit 4 (160 aa).

3 helical membrane passes run 36 to 56 (LLYV…ALAV), 95 to 115 (LLGV…PFIE), and 131 to 151 (TVFL…ALPL).

This sequence belongs to the cytochrome b family. PetD subfamily. As to quaternary structure, the 4 large subunits of the cytochrome b6-f complex are cytochrome b6, subunit IV (17 kDa polypeptide, PetD), cytochrome f and the Rieske protein, while the 4 small subunits are PetG, PetL, PetM and PetN. The complex functions as a dimer.

Its subcellular location is the cellular thylakoid membrane. Component of the cytochrome b6-f complex, which mediates electron transfer between photosystem II (PSII) and photosystem I (PSI), cyclic electron flow around PSI, and state transitions. The polypeptide is Cytochrome b6-f complex subunit 4 (Nostoc punctiforme (strain ATCC 29133 / PCC 73102)).